We begin with the raw amino-acid sequence, 461 residues long: Cysteine--tRNA ligase (461 aa).

Cys28 contacts Zn(2+). The 'HIGH' region motif lies at 30-40 (VTIYDLCHIGH). The Zn(2+) site is built by Cys209, His234, and Glu238. Residues 266 to 270 (KMSKS) carry the 'KMSKS' region motif. Lys269 lines the ATP pocket.

Belongs to the class-I aminoacyl-tRNA synthetase family. In terms of assembly, monomer. It depends on Zn(2+) as a cofactor.

Its subcellular location is the cytoplasm. The enzyme catalyses tRNA(Cys) + L-cysteine + ATP = L-cysteinyl-tRNA(Cys) + AMP + diphosphate. In Hamiltonella defensa subsp. Acyrthosiphon pisum (strain 5AT), this protein is Cysteine--tRNA ligase.